Reading from the N-terminus, the 159-residue chain is 6,7-dimethyl-8-ribityllumazine synthase (159 aa).

5-amino-6-(D-ribitylamino)uracil is bound by residues F22, A57–E59, and A81–I83. (2S)-2-hydroxy-3-oxobutyl phosphate is bound at residue G86–T87. Catalysis depends on H89, which acts as the Proton donor. F114 provides a ligand contact to 5-amino-6-(D-ribitylamino)uracil. R128 serves as a coordination point for (2S)-2-hydroxy-3-oxobutyl phosphate.

This sequence belongs to the DMRL synthase family. In terms of assembly, forms an icosahedral capsid composed of 60 subunits, arranged as a dodecamer of pentamers.

The enzyme catalyses (2S)-2-hydroxy-3-oxobutyl phosphate + 5-amino-6-(D-ribitylamino)uracil = 6,7-dimethyl-8-(1-D-ribityl)lumazine + phosphate + 2 H2O + H(+). It functions in the pathway cofactor biosynthesis; riboflavin biosynthesis; riboflavin from 2-hydroxy-3-oxobutyl phosphate and 5-amino-6-(D-ribitylamino)uracil: step 1/2. In terms of biological role, catalyzes the formation of 6,7-dimethyl-8-ribityllumazine by condensation of 5-amino-6-(D-ribitylamino)uracil with 3,4-dihydroxy-2-butanone 4-phosphate. This is the penultimate step in the biosynthesis of riboflavin. This chain is 6,7-dimethyl-8-ribityllumazine synthase, found in Shewanella baltica (strain OS155 / ATCC BAA-1091).